The sequence spans 305 residues: HPr kinase/phosphorylase (305 aa).

Active-site residues include histidine 138 and lysine 159. Residue 153–160 participates in ATP binding; the sequence is GESGIGKS. Serine 160 is a binding site for Mg(2+). Aspartate 177 functions as the Proton acceptor; for phosphorylation activity. Proton donor; for dephosphorylation activity in the catalytic mechanism. The tract at residues 201-210 is important for the catalytic mechanism of both phosphorylation and dephosphorylation; sequence IEIRGIGILD. Glutamate 202 contributes to the Mg(2+) binding site. Arginine 243 is a catalytic residue. Residues 264 to 269 form an important for the catalytic mechanism of dephosphorylation region; it reads PVRPGR.

Belongs to the HPrK/P family. In terms of assembly, homohexamer. The cofactor is Mg(2+).

The enzyme catalyses [HPr protein]-L-serine + ATP = [HPr protein]-O-phospho-L-serine + ADP + H(+). The catalysed reaction is [HPr protein]-O-phospho-L-serine + phosphate + H(+) = [HPr protein]-L-serine + diphosphate. Functionally, catalyzes the ATP- as well as the pyrophosphate-dependent phosphorylation of a specific serine residue in HPr, a phosphocarrier protein of the phosphoenolpyruvate-dependent sugar phosphotransferase system (PTS). HprK/P also catalyzes the pyrophosphate-producing, inorganic phosphate-dependent dephosphorylation (phosphorolysis) of seryl-phosphorylated HPr (P-Ser-HPr). The two antagonistic activities of HprK/P are regulated by several intracellular metabolites, which change their concentration in response to the absence or presence of rapidly metabolisable carbon sources (glucose, fructose, etc.) in the growth medium. Therefore, by controlling the phosphorylation state of HPr, HPrK/P is a sensor enzyme that plays a major role in the regulation of carbon metabolism and sugar transport: it mediates carbon catabolite repression (CCR), and regulates PTS-catalyzed carbohydrate uptake and inducer exclusion. The polypeptide is HPr kinase/phosphorylase (Thermoanaerobacter pseudethanolicus (strain ATCC 33223 / 39E) (Clostridium thermohydrosulfuricum)).